The primary structure comprises 304 residues: 2-oxoacid:ferredoxin oxidoreductase 2, subunit beta (304 aa).

The [4Fe-4S] cluster site is built by Cys12, Cys15, and Cys46. Residues 44–47 (IGCS) and His65 contribute to the thiamine diphosphate site. Mg(2+) is bound at residue Asp90. Residue 91 to 92 (GD) participates in thiamine diphosphate binding. Residues Asn118 and Val120 each coordinate Mg(2+). Thiamine diphosphate is bound at residue 122–123 (GL). Cys197 lines the [4Fe-4S] cluster pocket.

As to quaternary structure, heterodimer composed of an alpha and a beta subunit. [4Fe-4S] cluster serves as cofactor. Requires thiamine diphosphate as cofactor. It depends on Mg(2+) as a cofactor.

It catalyses the reaction a 2-oxocarboxylate + 2 oxidized [2Fe-2S]-[ferredoxin] + CoA = an acyl-CoA + 2 reduced [2Fe-2S]-[ferredoxin] + CO2 + H(+). Functionally, catalyzes the coenzyme A-dependent oxidative decarboxylation of different 2-oxoacids such as 2-oxoglutarate, pyruvate and 2-oxobutyrate to form their CoA derivatives. This is 2-oxoacid:ferredoxin oxidoreductase 2, subunit beta from Sulfurisphaera tokodaii (strain DSM 16993 / JCM 10545 / NBRC 100140 / 7) (Sulfolobus tokodaii).